A 288-amino-acid chain; its full sequence is Proteasome subunit beta (288 aa).

Positions Met1 to Gly57 are cleaved as a propeptide — removed in mature form; by autocatalysis. The Nucleophile role is filled by Thr58.

It belongs to the peptidase T1B family. The 20S proteasome core is composed of 14 alpha and 14 beta subunits that assemble into four stacked heptameric rings, resulting in a barrel-shaped structure. The two inner rings, each composed of seven catalytic beta subunits, are sandwiched by two outer rings, each composed of seven alpha subunits. The catalytic chamber with the active sites is on the inside of the barrel. Has a gated structure, the ends of the cylinder being occluded by the N-termini of the alpha-subunits. Is capped by the proteasome-associated ATPase, ARC.

The protein localises to the cytoplasm. It catalyses the reaction Cleavage of peptide bonds with very broad specificity.. The protein operates within protein degradation; proteasomal Pup-dependent pathway. With respect to regulation, the formation of the proteasomal ATPase ARC-20S proteasome complex, likely via the docking of the C-termini of ARC into the intersubunit pockets in the alpha-rings, may trigger opening of the gate for substrate entry. Interconversion between the open-gate and close-gate conformations leads to a dynamic regulation of the 20S proteasome proteolysis activity. Component of the proteasome core, a large protease complex with broad specificity involved in protein degradation. The protein is Proteasome subunit beta of Nakamurella multipartita (strain ATCC 700099 / DSM 44233 / CIP 104796 / JCM 9543 / NBRC 105858 / Y-104) (Microsphaera multipartita).